The following is a 332-amino-acid chain: tRNA dimethylallyltransferase (332 aa).

Residue G14–T21 participates in ATP binding. Residue T16–T21 coordinates substrate. Positions D39–Q42 are interaction with substrate tRNA. Residues K313 to L332 form a disordered region. Residues K317–L332 are compositionally biased toward basic and acidic residues.

This sequence belongs to the IPP transferase family. As to quaternary structure, monomer. Mg(2+) serves as cofactor.

The enzyme catalyses adenosine(37) in tRNA + dimethylallyl diphosphate = N(6)-dimethylallyladenosine(37) in tRNA + diphosphate. In terms of biological role, catalyzes the transfer of a dimethylallyl group onto the adenine at position 37 in tRNAs that read codons beginning with uridine, leading to the formation of N6-(dimethylallyl)adenosine (i(6)A). This is tRNA dimethylallyltransferase from Staphylococcus haemolyticus (strain JCSC1435).